Reading from the N-terminus, the 338-residue chain is DNA-directed RNA polymerase subunit alpha (338 aa).

Residues 1–10 show a composition bias toward polar residues; sequence MIQKNWQTLE. The segment at 1–24 is disordered; sequence MIQKNWQTLEKPSKLDITPGSDPK. The interval 1–234 is alpha N-terminal domain (alpha-NTD); the sequence is MIQKNWQTLE…DQLQMFINFE (234 aa). Residues 250-338 are alpha C-terminal domain (alpha-CTD); the sequence is FNKNLLRKVD…DLAKRLEEPY (89 aa).

It belongs to the RNA polymerase alpha chain family. Homodimer. The RNAP catalytic core consists of 2 alpha, 1 beta, 1 beta' and 1 omega subunit. When a sigma factor is associated with the core the holoenzyme is formed, which can initiate transcription.

The catalysed reaction is RNA(n) + a ribonucleoside 5'-triphosphate = RNA(n+1) + diphosphate. DNA-dependent RNA polymerase catalyzes the transcription of DNA into RNA using the four ribonucleoside triphosphates as substrates. The protein is DNA-directed RNA polymerase subunit alpha of Rhodospirillum centenum (strain ATCC 51521 / SW).